The primary structure comprises 323 residues: tRNA U34 carboxymethyltransferase (323 aa).

Residues K91, W105, K110, G130, 181-182, M196, Y200, and R315 contribute to the carboxy-S-adenosyl-L-methionine site; that span reads IE.

The protein belongs to the class I-like SAM-binding methyltransferase superfamily. CmoB family. As to quaternary structure, homotetramer.

It carries out the reaction carboxy-S-adenosyl-L-methionine + 5-hydroxyuridine(34) in tRNA = 5-carboxymethoxyuridine(34) in tRNA + S-adenosyl-L-homocysteine + H(+). Catalyzes carboxymethyl transfer from carboxy-S-adenosyl-L-methionine (Cx-SAM) to 5-hydroxyuridine (ho5U) to form 5-carboxymethoxyuridine (cmo5U) at position 34 in tRNAs. The chain is tRNA U34 carboxymethyltransferase from Serratia proteamaculans (strain 568).